Reading from the N-terminus, the 328-residue chain is 6-phosphogluconolactonase (328 aa).

This sequence belongs to the cycloisomerase 2 family.

It carries out the reaction 6-phospho-D-glucono-1,5-lactone + H2O = 6-phospho-D-gluconate + H(+). It functions in the pathway carbohydrate degradation; pentose phosphate pathway; D-ribulose 5-phosphate from D-glucose 6-phosphate (oxidative stage): step 2/3. Catalyzes the hydrolysis of 6-phosphogluconolactone to 6-phosphogluconate. The sequence is that of 6-phosphogluconolactonase from Photorhabdus laumondii subsp. laumondii (strain DSM 15139 / CIP 105565 / TT01) (Photorhabdus luminescens subsp. laumondii).